Reading from the N-terminus, the 199-residue chain is NAD(P)H dehydrogenase (quinone) (199 aa).

The region spanning Ile-4 to Val-190 is the Flavodoxin-like domain. FMN-binding positions include Ser-10–Ile-15 and Thr-78–Phe-80. An NAD(+)-binding site is contributed by Tyr-12. Position 98 (Trp-98) interacts with substrate. FMN is bound by residues Ser-113 to Gly-119 and His-134.

It belongs to the WrbA family. Requires FMN as cofactor.

It carries out the reaction a quinone + NADH + H(+) = a quinol + NAD(+). The catalysed reaction is a quinone + NADPH + H(+) = a quinol + NADP(+). This chain is NAD(P)H dehydrogenase (quinone), found in Rhizorhabdus wittichii (strain DSM 6014 / CCUG 31198 / JCM 15750 / NBRC 105917 / EY 4224 / RW1) (Sphingomonas wittichii).